The sequence spans 277 residues: Radial spoke head protein 9 homolog (277 aa).

Belongs to the flagellar radial spoke RSP9 family. Component of axonemal radial spoke complexes.

The protein localises to the cytoplasm. Its subcellular location is the cytoskeleton. The protein resides in the cilium axoneme. It localises to the flagellum axoneme. It is found in the cell projection. The protein localises to the kinocilium. Functionally, functions as part of axonemal radial spoke complexes that play an important part in the motility of sperm and cilia. Essential for both the radial spoke head assembly and the central pair microtubule stability in ependymal motile cilia. Required for motility of olfactory and neural cilia and for the structural integrity of ciliary axonemes in both 9+0 and 9+2 motile cilia. The protein is Radial spoke head protein 9 homolog (rsph9) of Xenopus tropicalis (Western clawed frog).